The chain runs to 288 residues: 33 kDa chaperonin (288 aa).

2 disulfide bridges follow: C237/C239 and C270/C273.

This sequence belongs to the HSP33 family. Post-translationally, under oxidizing conditions two disulfide bonds are formed involving the reactive cysteines. Under reducing conditions zinc is bound to the reactive cysteines and the protein is inactive.

The protein localises to the cytoplasm. In terms of biological role, redox regulated molecular chaperone. Protects both thermally unfolding and oxidatively damaged proteins from irreversible aggregation. Plays an important role in the bacterial defense system toward oxidative stress. The polypeptide is 33 kDa chaperonin (Agathobacter rectalis (strain ATCC 33656 / DSM 3377 / JCM 17463 / KCTC 5835 / VPI 0990) (Eubacterium rectale)).